The chain runs to 900 residues: Alanine--tRNA ligase (900 aa).

Zn(2+) is bound by residues His604, His608, Cys708, and His712.

This sequence belongs to the class-II aminoacyl-tRNA synthetase family. Requires Zn(2+) as cofactor.

It localises to the cytoplasm. The catalysed reaction is tRNA(Ala) + L-alanine + ATP = L-alanyl-tRNA(Ala) + AMP + diphosphate. Functionally, catalyzes the attachment of alanine to tRNA(Ala) in a two-step reaction: alanine is first activated by ATP to form Ala-AMP and then transferred to the acceptor end of tRNA(Ala). Also edits incorrectly charged Ser-tRNA(Ala) and Gly-tRNA(Ala) via its editing domain. This chain is Alanine--tRNA ligase, found in Saccharolobus islandicus (strain M.14.25 / Kamchatka #1) (Sulfolobus islandicus).